The primary structure comprises 75 residues: Carwaprin-b (75 aa).

Residues 1–24 (MSSGGLLLLLGLLTLWAELTPVSS) form the signal peptide. The 46-residue stretch at 27-72 (RPKKPGLCPPRPQKPPCVRECKNDWRCPGEQKCCRYGCIYECRDPI) folds into the WAP domain. 4 disulfides stabilise this stretch: Cys34-Cys60, Cys43-Cys64, Cys47-Cys59, and Cys53-Cys68.

Belongs to the venom waprin family. As to expression, expressed by the venom gland.

It localises to the secreted. Functionally, damages membranes of susceptible bacteria. Has no hemolytic activity. Not toxic to mice. Does not inhibit the proteinases elastase and cathepsin G. The protein is Carwaprin-b of Tropidechis carinatus (Australian rough-scaled snake).